The primary structure comprises 197 residues: Ion-translocating oxidoreductase complex subunit B (197 aa).

A hydrophobic region spans residues 1–26 (MSTILIAIIALAALAAVFGAILGFAS). Residues 32–90 (EADPIVDQIDSILPQTQCGQCGYPGCRPYAEAIANGDQINKCPPGGQATIEKLADLMGV) form the 4Fe-4S domain. 12 residues coordinate [4Fe-4S] cluster: cysteine 49, cysteine 52, cysteine 57, cysteine 73, cysteine 114, cysteine 117, cysteine 120, cysteine 124, cysteine 144, cysteine 147, cysteine 150, and cysteine 154. 2 4Fe-4S ferredoxin-type domains span residues 105–134 (TVAF…GGTK) and 135–164 (ALHT…MIPV).

The protein belongs to the 4Fe4S bacterial-type ferredoxin family. RnfB subfamily. The complex is composed of six subunits: RnfA, RnfB, RnfC, RnfD, RnfE and RnfG. Requires [4Fe-4S] cluster as cofactor.

It localises to the cell inner membrane. Functionally, part of a membrane-bound complex that couples electron transfer with translocation of ions across the membrane. The protein is Ion-translocating oxidoreductase complex subunit B of Vibrio campbellii (strain ATCC BAA-1116).